A 197-amino-acid polypeptide reads, in one-letter code: ATP-dependent Clp protease proteolytic subunit (197 aa).

The active-site Nucleophile is Ser98. His123 is an active-site residue.

The protein belongs to the peptidase S14 family. As to quaternary structure, fourteen ClpP subunits assemble into 2 heptameric rings which stack back to back to give a disk-like structure with a central cavity, resembling the structure of eukaryotic proteasomes. Forms large heterooligomeric complexes consisting of an ATPase component (ClpX, ClpC or ClpE) and a proteolytic component (ClpP).

It is found in the cytoplasm. The catalysed reaction is Hydrolysis of proteins to small peptides in the presence of ATP and magnesium. alpha-casein is the usual test substrate. In the absence of ATP, only oligopeptides shorter than five residues are hydrolyzed (such as succinyl-Leu-Tyr-|-NHMec, and Leu-Tyr-Leu-|-Tyr-Trp, in which cleavage of the -Tyr-|-Leu- and -Tyr-|-Trp bonds also occurs).. Its activity is regulated as follows. Low intrinsic peptidase activity is stimulated by ATP-binding subunits ClpC, ClpE and ClpX. Activity is disregulated by acyldepsipeptides (ADEP) antibiotics, which negate the need for ATP-binding subunits for activation and which makes it into an unregulated protease. Each ClpP subunit binds 1 ADEP molecule, which prevents binding of ClpX. ADEP binding causes conformational shifts that open the gated pore of the ring. Protease activity is inhibited by diisopropylfluoro-phosphate. Protease activity is inhibited by bortezomib, an oncology drug originally designed to work on the human proteasome. Cleaves peptides in various proteins in a process that requires ATP hydrolysis. Has a limited peptidase activity in the absence of ATP-binding subunits ClpC, ClpE or ClpX. Has a chymotrypsin-like activity. Plays a major role in the degradation of misfolded proteins. ClpXP is involved in the complete degradation of the site-2 clipped anti-sigma-W factor RsiW. This results in the release of SigW and the transcriptional activation of genes under the control of the sigma-W factor. Probably the major protease that degrades proteins tagged by trans-translation. This Bacillus subtilis (strain 168) protein is ATP-dependent Clp protease proteolytic subunit.